Here is a 700-residue protein sequence, read N- to C-terminus: Ribonucleoside-diphosphate reductase subunit alpha (700 aa).

Substrate-binding positions include T153, 169–170 (SC), G198, 380–384 (NLCSE), and 580–584 (PTGSI). A disulfide bond links C170 and C409. N380 serves as the catalytic Proton acceptor. The active-site Cysteine radical intermediate is the C382. E384 (proton acceptor) is an active-site residue.

Belongs to the ribonucleoside diphosphate reductase large chain family. In terms of assembly, tetramer of two alpha and two beta subunits.

The catalysed reaction is a 2'-deoxyribonucleoside 5'-diphosphate + [thioredoxin]-disulfide + H2O = a ribonucleoside 5'-diphosphate + [thioredoxin]-dithiol. With respect to regulation, under complex allosteric control mediated by deoxynucleoside triphosphates and ATP binding. The type of nucleotide bound at the specificity site determines substrate preference. It seems probable that ATP makes the enzyme reduce CDP and UDP, dGTP favors ADP reduction and dTTP favors GDP reduction. Provides the precursors necessary for DNA synthesis. Catalyzes the biosynthesis of deoxyribonucleotides from the corresponding ribonucleotides. This Bacillus subtilis (strain 168) protein is Ribonucleoside-diphosphate reductase subunit alpha.